The chain runs to 334 residues: Cytochrome c biogenesis protein CcsA (334 aa).

8 consecutive transmembrane segments (helical) span residues 12–32 (NTAF…VVFP), 35–55 (WLVQ…TALL), 67–87 (ISNL…VHFI), 96–116 (FVGA…ALTL), 141–161 (VMMV…AFLF), 242–262 (IIGL…VWAN), 277–297 (WALI…TKGW), and 303–323 (AILA…VNLL).

Belongs to the CcmF/CycK/Ccl1/NrfE/CcsA family. As to quaternary structure, may interact with ccs1.

The protein localises to the cellular thylakoid membrane. In terms of biological role, required during biogenesis of c-type cytochromes (cytochrome c6 and cytochrome f) at the step of heme attachment. The polypeptide is Cytochrome c biogenesis protein CcsA (Synechocystis sp. (strain ATCC 27184 / PCC 6803 / Kazusa)).